Here is a 530-residue protein sequence, read N- to C-terminus: Phosphoenolpyruvate carboxykinase (ATP) (530 aa).

Substrate contacts are provided by arginine 59, tyrosine 198, and lysine 204. ATP-binding positions include lysine 204, histidine 223, and 239–247; that span reads GLSGTGKTT. Lysine 204 and histidine 223 together coordinate Mn(2+). Aspartate 260 contacts Mn(2+). ATP is bound by residues glutamate 288, arginine 325, 440–441, and threonine 446; that span reads RI. Arginine 325 provides a ligand contact to substrate.

The protein belongs to the phosphoenolpyruvate carboxykinase (ATP) family. Mn(2+) is required as a cofactor.

It localises to the cytoplasm. It carries out the reaction oxaloacetate + ATP = phosphoenolpyruvate + ADP + CO2. It participates in carbohydrate biosynthesis; gluconeogenesis. Functionally, involved in the gluconeogenesis. Catalyzes the conversion of oxaloacetate (OAA) to phosphoenolpyruvate (PEP) through direct phosphoryl transfer between the nucleoside triphosphate and OAA. The protein is Phosphoenolpyruvate carboxykinase (ATP) of Azobacteroides pseudotrichonymphae genomovar. CFP2.